The following is a 441-amino-acid chain: Trigger factor (441 aa).

The 86-residue stretch at 161 to 246 folds into the PPIase FKBP-type domain; that stretch reads GDQVTIDFVG…VSEVAEQILP (86 aa).

Belongs to the FKBP-type PPIase family. Tig subfamily.

The protein resides in the cytoplasm. The catalysed reaction is [protein]-peptidylproline (omega=180) = [protein]-peptidylproline (omega=0). In terms of biological role, involved in protein export. Acts as a chaperone by maintaining the newly synthesized protein in an open conformation. Functions as a peptidyl-prolyl cis-trans isomerase. This is Trigger factor from Marinomonas sp. (strain MWYL1).